Consider the following 534-residue polypeptide: Nitrate/nitrite transporter NrtP (534 aa).

The next 12 membrane-spanning stretches (helical) occupy residues 19-39 (WFAF…ATTI), 52-72 (TIGL…GMLL), 79-99 (LTYS…ATAQ), 109-129 (LLMG…AEWF), 150-170 (AFSA…PGAF), 195-215 (AAIA…YFSV), 240-260 (DFWF…VLAW), 266-286 (NFLN…LYLF), 382-404 (WTMV…VAGT), 409-431 (IAVL…TFAI), 445-465 (GNVG…LLLL), and 485-505 (GFFQ…AFFL).

This sequence belongs to the major facilitator superfamily. Nitrate/nitrite porter (TC 2.A.1.8) family.

Its subcellular location is the cell inner membrane. In terms of biological role, high-efficiency transport system for both nitrate and nitrite. The chain is Nitrate/nitrite transporter NrtP from Picosynechococcus sp. (strain ATCC 27264 / PCC 7002 / PR-6) (Agmenellum quadruplicatum).